The following is a 351-amino-acid chain: UDP-N-acetylglucosamine--N-acetylmuramyl-(pentapeptide) pyrophosphoryl-undecaprenol N-acetylglucosamine transferase (351 aa).

UDP-N-acetyl-alpha-D-glucosamine-binding positions include Thr13–Gly15, Asn125, Arg161, Ser189, Ile241, Ala260–Glu265, and Gln285.

It belongs to the glycosyltransferase 28 family. MurG subfamily.

The protein localises to the cell inner membrane. The enzyme catalyses di-trans,octa-cis-undecaprenyl diphospho-N-acetyl-alpha-D-muramoyl-L-alanyl-D-glutamyl-meso-2,6-diaminopimeloyl-D-alanyl-D-alanine + UDP-N-acetyl-alpha-D-glucosamine = di-trans,octa-cis-undecaprenyl diphospho-[N-acetyl-alpha-D-glucosaminyl-(1-&gt;4)]-N-acetyl-alpha-D-muramoyl-L-alanyl-D-glutamyl-meso-2,6-diaminopimeloyl-D-alanyl-D-alanine + UDP + H(+). Its pathway is cell wall biogenesis; peptidoglycan biosynthesis. In terms of biological role, cell wall formation. Catalyzes the transfer of a GlcNAc subunit on undecaprenyl-pyrophosphoryl-MurNAc-pentapeptide (lipid intermediate I) to form undecaprenyl-pyrophosphoryl-MurNAc-(pentapeptide)GlcNAc (lipid intermediate II). The sequence is that of UDP-N-acetylglucosamine--N-acetylmuramyl-(pentapeptide) pyrophosphoryl-undecaprenol N-acetylglucosamine transferase from Haemophilus influenzae (strain PittGG).